Here is a 235-residue protein sequence, read N- to C-terminus: MTIIAGNFKANLTRIQVATFAKELDSILTDMQTSSHLQVDIFPSHTALLTNNFKHFHIGAQNAYFAQNGGFTGEIGLSQLQEFNINRLIIGHSERRTLFGENQDFINKKFRFYAEAGFEIYYCIGEPLSMRQKGKNALKDFLGAQLDGIDITYPKLIIAYEPIWAIGTGESATLEQIESTHSMLATFTSAPLLYGGSVNPTNAREILCTPYVNGVLVGSASLNIQSFTDIIRASK.

7–9 (NFK) provides a ligand contact to substrate. Residue His92 is the Electrophile of the active site. Glu161 functions as the Proton acceptor in the catalytic mechanism. The substrate site is built by Gly167 and Ser197.

It belongs to the triosephosphate isomerase family. In terms of assembly, homodimer.

It localises to the cytoplasm. It carries out the reaction D-glyceraldehyde 3-phosphate = dihydroxyacetone phosphate. It functions in the pathway carbohydrate biosynthesis; gluconeogenesis. It participates in carbohydrate degradation; glycolysis; D-glyceraldehyde 3-phosphate from glycerone phosphate: step 1/1. Involved in the gluconeogenesis. Catalyzes stereospecifically the conversion of dihydroxyacetone phosphate (DHAP) to D-glyceraldehyde-3-phosphate (G3P). The sequence is that of Triosephosphate isomerase from Helicobacter hepaticus (strain ATCC 51449 / 3B1).